The primary structure comprises 964 residues: uncharacterized protein (964 aa).

Residues 97–117 (DSESDVGSDAESDAESDAESD) are compositionally biased toward acidic residues. The disordered stretch occupies residues 97-208 (DSESDVGSDA…SNSIDNESES (112 aa)). Positions 121-148 (HTQNNTNTPINNITLINLDSSNNSTQSD) are enriched in low complexity. Residues 149-163 (NESDNESDNESDNES) are compositionally biased toward acidic residues. Residues 192–203 (NSDNIGNSNSID) show a composition bias toward low complexity.

This is an uncharacterized protein from Acanthamoeba polyphaga (Amoeba).